The following is a 235-amino-acid chain: tRNA (adenine(37)-N6)-methyltransferase (235 aa).

The TsaA-like domain maps to 6 to 147; sequence FEQIGVIRSP…YLPFAESLPD (142 aa). Residues 23-25, 64-65, Arg-92, and 127-130 contribute to the S-adenosyl-L-methionine site; these read PRQ, HQ, and VDGT.

It belongs to the tRNA methyltransferase O family. As to quaternary structure, homodimer.

It catalyses the reaction N(6)-L-threonylcarbamoyladenosine(37) in tRNA + S-adenosyl-L-methionine = N(6)-methyl,N(6)-L-threonylcarbamoyladenosine(37) in tRNA + S-adenosyl-L-homocysteine + H(+). Functionally, S-adenosyl-L-methionine-dependent methyltransferase responsible for the addition of the methyl group in the formation of N6-methyl-N6-threonylcarbamoyladenosine at position 37 (m(6)t(6)A37) of the tRNA anticodon loop of tRNA(Thr)(GGU) that read codons starting with adenosine. The methyl group of m(6)t(6)A37 appears to slightly improve the efficiency of the tRNA decoding ability. The sequence is that of tRNA (adenine(37)-N6)-methyltransferase from Escherichia coli (strain K12).